The sequence spans 84 residues: U4-theraphotoxin-Hhn1a (84 aa).

An N-terminal signal peptide occupies residues 1–22 (MKVTLIAILTCAAVLVLHTTAA). Positions 23–47 (EELEESQLMEVGMPDTELAAVDGER) are excised as a propeptide. Cystine bridges form between Cys51/Cys65, Cys55/Cys76, and Cys70/Cys81.

Belongs to the neurotoxin 12 (Hwtx-2) family. 02 (Hwtx-2) subfamily. In terms of tissue distribution, expressed by the venom gland.

The protein localises to the secreted. Postsynaptic neurotoxin. The sequence is that of U4-theraphotoxin-Hhn1a from Cyriopagopus hainanus (Chinese bird spider).